The chain runs to 151 residues: Deoxyuridine 5'-triphosphate nucleotidohydrolase (151 aa).

Substrate is bound by residues 70-72 (RSG), asparagine 83, 87-89 (LID), and methionine 97.

Belongs to the dUTPase family. Mg(2+) is required as a cofactor.

The enzyme catalyses dUTP + H2O = dUMP + diphosphate + H(+). Its pathway is pyrimidine metabolism; dUMP biosynthesis; dUMP from dCTP (dUTP route): step 2/2. In terms of biological role, this enzyme is involved in nucleotide metabolism: it produces dUMP, the immediate precursor of thymidine nucleotides and it decreases the intracellular concentration of dUTP so that uracil cannot be incorporated into DNA. This is Deoxyuridine 5'-triphosphate nucleotidohydrolase from Shigella sonnei (strain Ss046).